A 274-amino-acid polypeptide reads, in one-letter code: Dermonecrotic toxin SdSicTox-betaIIB1ai (274 aa).

The active site involves His-5. Residues Glu-25 and Asp-27 each coordinate Mg(2+). The Nucleophile role is filled by His-41. Cystine bridges form between Cys-45–Cys-51 and Cys-47–Cys-190. Asp-85 serves as a coordination point for Mg(2+).

Belongs to the arthropod phospholipase D family. Class II subfamily. The cofactor is Mg(2+). In terms of tissue distribution, expressed by the venom gland.

It is found in the secreted. The catalysed reaction is an N-(acyl)-sphingosylphosphocholine = an N-(acyl)-sphingosyl-1,3-cyclic phosphate + choline. It catalyses the reaction an N-(acyl)-sphingosylphosphoethanolamine = an N-(acyl)-sphingosyl-1,3-cyclic phosphate + ethanolamine. The enzyme catalyses a 1-acyl-sn-glycero-3-phosphocholine = a 1-acyl-sn-glycero-2,3-cyclic phosphate + choline. It carries out the reaction a 1-acyl-sn-glycero-3-phosphoethanolamine = a 1-acyl-sn-glycero-2,3-cyclic phosphate + ethanolamine. Dermonecrotic toxins cleave the phosphodiester linkage between the phosphate and headgroup of certain phospholipids (sphingolipid and lysolipid substrates), forming an alcohol (often choline) and a cyclic phosphate. This toxin acts on sphingomyelin (SM). It may also act on ceramide phosphoethanolamine (CPE), lysophosphatidylcholine (LPC) and lysophosphatidylethanolamine (LPE), but not on lysophosphatidylserine (LPS), and lysophosphatidylglycerol (LPG). It acts by transphosphatidylation, releasing exclusively cyclic phosphate products as second products. Induces dermonecrosis, hemolysis, increased vascular permeability, edema, inflammatory response, and platelet aggregation. The chain is Dermonecrotic toxin SdSicTox-betaIIB1ai from Sicarius cf. damarensis (strain GJB-2008) (Six-eyed sand spider).